Consider the following 498-residue polypeptide: GTPase Der (498 aa).

EngA-type G domains are found at residues 3 to 167 and 210 to 383; these read PVVA…FDDL and IKLA…KSAT. Residues 9–16, 57–61, 119–122, 216–223, 263–267, and 328–331 contribute to the GTP site; these read GRPNVGKS, DTGGI, NKID, DTAGV, and NKWD. The 85-residue stretch at 384-468 folds into the KH-like domain; sequence TRVGTSVLTR…PIRINFQNSE (85 aa).

Belongs to the TRAFAC class TrmE-Era-EngA-EngB-Septin-like GTPase superfamily. EngA (Der) GTPase family. In terms of assembly, associates with the 50S ribosomal subunit.

In terms of biological role, GTPase that plays an essential role in the late steps of ribosome biogenesis. In Vibrio parahaemolyticus serotype O3:K6 (strain RIMD 2210633), this protein is GTPase Der.